Reading from the N-terminus, the 309-residue chain is Ketosamine-3-kinase (309 aa).

Ser20 carries the phosphoserine modification. 89-91 provides a ligand contact to ATP; sequence EHL. Catalysis depends on Asp217, which acts as the Proton acceptor.

It belongs to the fructosamine kinase family.

It carries out the reaction N(6)-D-ribulosyl-L-lysyl-[protein] + ATP = N(6)-(3-O-phospho-D-ribulosyl)-L-lysyl-[protein] + ADP + H(+). It catalyses the reaction N(6)-(D-psicosyl)-L-lysyl-[protein] + ATP = N(6)-(3-O-phospho-D-psicosyl)-L-lysyl-[protein] + ADP + H(+). In terms of biological role, ketosamine-3-kinase involved in protein deglycation by mediating phosphorylation of ribuloselysine and psicoselysine on glycated proteins, to generate ribuloselysine-3 phosphate and psicoselysine-3 phosphate, respectively. Ribuloselysine-3 phosphate and psicoselysine-3 phosphate adducts are unstable and decompose under physiological conditions. Not able to phosphorylate fructoselysine. This chain is Ketosamine-3-kinase, found in Mus musculus (Mouse).